The chain runs to 164 residues: uncharacterized protein (164 aa).

A compositionally biased stretch (polar residues) spans 1–29; sequence MLCVRSSSSNLESDTYLSRYSTRASAGTG. Positions 1-62 are disordered; the sequence is MLCVRSSSSN…SKPSNNKNID (62 aa). The span at 43–62 shows a compositional bias: low complexity; it reads SSDSSSSSSESKPSNNKNID.

This is an uncharacterized protein from Schizosaccharomyces pombe (strain 972 / ATCC 24843) (Fission yeast).